The following is a 2378-amino-acid chain: Dimodular nonribosomal peptide synthase (2378 aa).

2 Carrier domains span residues 961–1036 (APRT…DLAQ) and 2036–2111 (GPRT…EMGS). 2 positions are modified to O-(pantetheine 4'-phosphoryl)serine: Ser-996 and Ser-2071.

This sequence belongs to the ATP-dependent AMP-binding enzyme family. Pantetheine 4'-phosphate serves as cofactor.

The enzyme catalyses holo-[peptidyl-carrier protein] + L-threonine + ATP = L-threonyl-[peptidyl-carrier protein] + AMP + diphosphate. The catalysed reaction is holo-[peptidyl-carrier protein] + glycine + ATP = glycyl-[peptidyl-carrier protein] + AMP + diphosphate. It functions in the pathway siderophore biosynthesis; bacillibactin biosynthesis. Specifically adenylates L-threonine and, to a lesser extent, glycine and covalently loads both amino acids onto their corresponding peptidyl carrier domains. The protein is Dimodular nonribosomal peptide synthase (dhbF) of Bacillus subtilis (strain 168).